A 719-amino-acid polypeptide reads, in one-letter code: uncharacterized protein (719 aa).

A coiled-coil region spans residues 64 to 100 (IQNLNQRKEEVIRLIAEQDKLTDNLKRKIEQSVKLQE). Positions 649 to 718 (GMELQGTVRN…QKGRVSLSMV (70 aa)) constitute an S1 motif domain.

This is an uncharacterized protein from Bacillus subtilis (strain 168).